The sequence spans 636 residues: DNA mismatch repair protein MutL (636 aa).

The interval 362–393 is disordered; the sequence is RKTPEVHEEAEKPEFLVKQEAKNSEEPKNETE. Residues 363-393 show a composition bias toward basic and acidic residues; that stretch reads KTPEVHEEAEKPEFLVKQEAKNSEEPKNETE.

It belongs to the DNA mismatch repair MutL/HexB family.

Its function is as follows. This protein is involved in the repair of mismatches in DNA. It is required for dam-dependent methyl-directed DNA mismatch repair. May act as a 'molecular matchmaker', a protein that promotes the formation of a stable complex between two or more DNA-binding proteins in an ATP-dependent manner without itself being part of a final effector complex. This Lactobacillus helveticus (strain DPC 4571) protein is DNA mismatch repair protein MutL.